The sequence spans 188 residues: Elongation factor P (188 aa).

An N6-(3,6-diaminohexanoyl)-5-hydroxylysine modification is found at lysine 34.

This sequence belongs to the elongation factor P family. May be beta-lysylated on the epsilon-amino group of Lys-34 by the combined action of EpmA and EpmB, and then hydroxylated on the C5 position of the same residue by EpmC (if this protein is present). Lysylation is critical for the stimulatory effect of EF-P on peptide-bond formation. The lysylation moiety may extend toward the peptidyltransferase center and stabilize the terminal 3-CCA end of the tRNA. Hydroxylation of the C5 position on Lys-34 may allow additional potential stabilizing hydrogen-bond interactions with the P-tRNA.

It is found in the cytoplasm. Its pathway is protein biosynthesis; polypeptide chain elongation. Its function is as follows. Involved in peptide bond synthesis. Alleviates ribosome stalling that occurs when 3 or more consecutive Pro residues or the sequence PPG is present in a protein, possibly by augmenting the peptidyl transferase activity of the ribosome. Modification of Lys-34 is required for alleviation. The chain is Elongation factor P from Haemophilus influenzae (strain PittGG).